We begin with the raw amino-acid sequence, 118 residues long: Crustacean hyperglycemic hormones 2 (118 aa).

The first 22 residues, 1–22 (MTAFRLVAVALVVVVACSTTWA), serve as a signal peptide directing secretion. Intrachain disulfides connect Cys-51–Cys-87, Cys-67–Cys-83, and Cys-70–Cys-96. The residue at position 116 (Val-116) is a Valine amide.

The protein belongs to the arthropod CHH/MIH/GIH/VIH hormone family.

Its subcellular location is the secreted. In terms of biological role, hormone found in the sinus gland of isopods and decapods which controls the blood sugar level. Has a secretagogue action over the amylase released from the midgut gland. May act as a stress hormone and may be involved in the control of molting and reproduction. The polypeptide is Crustacean hyperglycemic hormones 2 (CHH2) (Penaeus monodon (Giant tiger prawn)).